Consider the following 406-residue polypeptide: MSLAGKKIVLGVSGGIAAYKTPELVRRLRDRGADVRVAMTEAAKAFITPLSLQAVSGYPVSDSLLDPAAEAAMGHIELGKWADLVILAPATADLIARVAAGMANDLVSTICLATPAPVAVLPAMNQQMYRAAATQHNLEVLASRGLLIWGPDSGSQACGDIGPGRMLDPLTIVDMAVAHFSPVNDLKHLNIMITAGPTREPLDPVRYISNHSSGKMGFAIAAAAARRGANVTLVSGPVSLPTPPFVKRVDVMTALEMEAAVNASVQQQNIFIGCAAVADYRAATVAPEKIKKQATQGDELTIKMVKNPDIVAGVAALKDHRPYVVGFAAETNNVEEYARQKRIRKNLDLICANDVSQPTQGFNSDNNALHLFWQDGDKVLPLERKELLGQLLLDEIVTRYDEKNRR.

The segment at 2 to 190 (SLAGKKIVLG…SPVNDLKHLN (189 aa)) is phosphopantothenoylcysteine decarboxylase. The active-site Proton donor is the Cys158. A phosphopantothenate--cysteine ligase region spans residues 191-406 (IMITAGPTRE…VTRYDEKNRR (216 aa)). Residues 273–275 (GCA), Asp279, Lys289, 308–311 (PDIV), Phe327, Lys341, and Lys345 each bind CTP.

The protein in the N-terminal section; belongs to the HFCD (homo-oligomeric flavin containing Cys decarboxylase) superfamily. It in the C-terminal section; belongs to the PPC synthetase family. It depends on Mg(2+) as a cofactor. FMN is required as a cofactor.

The enzyme catalyses N-[(R)-4-phosphopantothenoyl]-L-cysteine + H(+) = (R)-4'-phosphopantetheine + CO2. It carries out the reaction (R)-4'-phosphopantothenate + L-cysteine + CTP = N-[(R)-4-phosphopantothenoyl]-L-cysteine + CMP + diphosphate + H(+). It participates in cofactor biosynthesis; coenzyme A biosynthesis; CoA from (R)-pantothenate: step 2/5. Its pathway is cofactor biosynthesis; coenzyme A biosynthesis; CoA from (R)-pantothenate: step 3/5. Functionally, catalyzes two sequential steps in the biosynthesis of coenzyme A. In the first step cysteine is conjugated to 4'-phosphopantothenate to form 4-phosphopantothenoylcysteine. In the second step the latter compound is decarboxylated to form 4'-phosphopantotheine. This chain is Coenzyme A biosynthesis bifunctional protein CoaBC, found in Escherichia coli O6:H1 (strain CFT073 / ATCC 700928 / UPEC).